The following is a 240-amino-acid chain: UDP-2,3-diacylglucosamine hydrolase (240 aa).

Residues aspartate 8, histidine 10, aspartate 41, asparagine 79, and histidine 114 each contribute to the Mn(2+) site. Substrate is bound at residue 79–80; it reads NR. Residues aspartate 122, serine 160, asparagine 164, lysine 167, and histidine 195 each coordinate substrate. Positions 195 and 197 each coordinate Mn(2+).

Belongs to the LpxH family. The cofactor is Mn(2+).

Its subcellular location is the cell inner membrane. The enzyme catalyses UDP-2-N,3-O-bis[(3R)-3-hydroxytetradecanoyl]-alpha-D-glucosamine + H2O = 2-N,3-O-bis[(3R)-3-hydroxytetradecanoyl]-alpha-D-glucosaminyl 1-phosphate + UMP + 2 H(+). It functions in the pathway glycolipid biosynthesis; lipid IV(A) biosynthesis; lipid IV(A) from (3R)-3-hydroxytetradecanoyl-[acyl-carrier-protein] and UDP-N-acetyl-alpha-D-glucosamine: step 4/6. Its function is as follows. Hydrolyzes the pyrophosphate bond of UDP-2,3-diacylglucosamine to yield 2,3-diacylglucosamine 1-phosphate (lipid X) and UMP by catalyzing the attack of water at the alpha-P atom. Involved in the biosynthesis of lipid A, a phosphorylated glycolipid that anchors the lipopolysaccharide to the outer membrane of the cell. This chain is UDP-2,3-diacylglucosamine hydrolase, found in Shigella sonnei (strain Ss046).